Reading from the N-terminus, the 402-residue chain is Multidrug resistance protein MdtH (402 aa).

Residues 1 to 12 (MSRVSQARNLGK) lie on the Cytoplasmic side of the membrane. The helical transmembrane segment at 13-33 (YFLLIDNMLVVLGFFVVFPLI) threads the bilayer. Topologically, residues 34–98 (SIRFVDQMGW…GFATMGIAHE (65 aa)) are periplasmic. A helical transmembrane segment spans residues 99–116 (PWLLWFSCFLSGLGGTLF). Residues 117-138 (DPPRSALVVKLIRPEQRGRFFS) are Cytoplasmic-facing. Residues 139–159 (LLMMQDSAGAVIGALLGSWLL) form a helical membrane-spanning segment. Over 160 to 164 (QYDFR) the chain is Periplasmic. Residues 165 to 185 (LVCATGAILFILCALFNAWLL) form a helical membrane-spanning segment. The Cytoplasmic portion of the chain corresponds to 186-213 (PAWKLSTVRTPVREGMRRVMSDKRFVTY). The chain crosses the membrane as a helical span at residues 214 to 234 (VLTLAGYYMLAVQVMLMLPIM). Topologically, residues 235–243 (VNDIAGSPA) are periplasmic. Residues 244-264 (AVKWMYAIEACLSLTLLYPIA) traverse the membrane as a helical segment. The Cytoplasmic segment spans residues 265–276 (RWSEKRFRLEHR). The chain crosses the membrane as a helical span at residues 277 to 297 (LMAGLLVMSLSMIPIGMVGNL). Residues 298 to 299 (QQ) lie on the Periplasmic side of the membrane. A helical membrane pass occupies residues 300 to 320 (LFTLICAFYIGSVIAEPARET). Over 321–339 (LSASLADARARGSYMGFSR) the chain is Cytoplasmic. A helical transmembrane segment spans residues 340-360 (LGLAIGGAIGYIGGGWLFDMG). At 361 to 367 (KALAQPE) the chain is on the periplasmic side. Residues 368-388 (LPWMMLGIIGFITFLALGWQF) form a helical membrane-spanning segment. Residues 389-402 (SHKRTPRRMLEPGA) are Cytoplasmic-facing.

Belongs to the major facilitator superfamily. DHA1 family. MdtH (TC 2.A.1.2.21) subfamily.

Its subcellular location is the cell inner membrane. In Salmonella schwarzengrund (strain CVM19633), this protein is Multidrug resistance protein MdtH.